A 454-amino-acid chain; its full sequence is MDAHAINERYVGPRCHRLAHVVLPRTFLLHHAIPLEPEIIFSTYTRFSRSPGSSRRLVVCGKRVLPGEENQLASSPSGLALSLPLFSHDGNFHPFDISVLRISCPGSNLSLTVRFLYLSLVVAMGAGRNNARSPTVDGVSPPEGAVAHPLEELQRLARATPDPALTRGPLQVLTGLLRAGSDGDRATHHMALEAPGTVRGESLDPPVSQKGPARTRHRPPPVRLSFNPVNADVPATWRDATNVYSGAPYYVCVYERGGRQEDDWLPIPLSFPEEPVPPPPGLVFMDDLFINTKQCDFVDTLEAACRTQGYTLRQRVPVAIPRDAEIADAVKSHFLEACLVLRGLASEASAWIRAATSPPLGRHACWMDVLGLWESRPHTLGLELRGVNCGGTDGDWLEILKQPDVQKTVSGSLVACVIVTPALEAWLVLPGGFAIKGRYRASKEDLVFIRGRYG.

The segment at 197-227 (TVRGESLDPPVSQKGPARTRHRPPPVRLSFN) is disordered.

The protein belongs to the herpesviridae CVC1 protein family. As to quaternary structure, interacts (via C-terminus) with capsid vertex component 2/CVC2.

The protein localises to the virion. Its subcellular location is the host nucleus. Functionally, capsid vertex-specific component that plays a role during viral DNA encapsidation, assuring correct genome cleavage and presumably stabilizing capsids that contain full-length viral genomes. In Human herpesvirus 8 type P (isolate GK18) (HHV-8), this protein is Capsid vertex component 1.